The primary structure comprises 384 residues: Anhydro-N-acetylmuramic acid kinase (384 aa).

9-16 lines the ATP pocket; it reads GTSVDGID.

It belongs to the anhydro-N-acetylmuramic acid kinase family.

The catalysed reaction is 1,6-anhydro-N-acetyl-beta-muramate + ATP + H2O = N-acetyl-D-muramate 6-phosphate + ADP + H(+). Its pathway is amino-sugar metabolism; 1,6-anhydro-N-acetylmuramate degradation. It participates in cell wall biogenesis; peptidoglycan recycling. In terms of biological role, catalyzes the specific phosphorylation of 1,6-anhydro-N-acetylmuramic acid (anhMurNAc) with the simultaneous cleavage of the 1,6-anhydro ring, generating MurNAc-6-P. Is required for the utilization of anhMurNAc either imported from the medium or derived from its own cell wall murein, and thus plays a role in cell wall recycling. This Rippkaea orientalis (strain PCC 8801 / RF-1) (Cyanothece sp. (strain PCC 8801)) protein is Anhydro-N-acetylmuramic acid kinase.